The following is a 318-amino-acid chain: Methionyl-tRNA formyltransferase (318 aa).

A (6S)-5,6,7,8-tetrahydrofolate-binding site is contributed by 112-115; the sequence is SILP.

It belongs to the Fmt family.

It carries out the reaction L-methionyl-tRNA(fMet) + (6R)-10-formyltetrahydrofolate = N-formyl-L-methionyl-tRNA(fMet) + (6S)-5,6,7,8-tetrahydrofolate + H(+). Functionally, attaches a formyl group to the free amino group of methionyl-tRNA(fMet). The formyl group appears to play a dual role in the initiator identity of N-formylmethionyl-tRNA by promoting its recognition by IF2 and preventing the misappropriation of this tRNA by the elongation apparatus. The sequence is that of Methionyl-tRNA formyltransferase from Shewanella baltica (strain OS223).